A 105-amino-acid chain; its full sequence is Large ribosomal subunit protein uL24 (105 aa).

It belongs to the universal ribosomal protein uL24 family. Part of the 50S ribosomal subunit.

Its function is as follows. One of two assembly initiator proteins, it binds directly to the 5'-end of the 23S rRNA, where it nucleates assembly of the 50S subunit. Functionally, one of the proteins that surrounds the polypeptide exit tunnel on the outside of the subunit. The polypeptide is Large ribosomal subunit protein uL24 (Psychrobacter arcticus (strain DSM 17307 / VKM B-2377 / 273-4)).